A 428-amino-acid chain; its full sequence is RF4 protein (428 aa).

3 N-linked (GlcNAc...) asparagine glycosylation sites follow: Asn8, Asn205, and Asn344.

Not known. This chain is RF4 protein (RF4), found in Kluyveromyces lactis (strain ATCC 8585 / CBS 2359 / DSM 70799 / NBRC 1267 / NRRL Y-1140 / WM37) (Yeast).